We begin with the raw amino-acid sequence, 451 residues long: Protein NINJA homolog 1 (451 aa).

Disordered stretches follow at residues 1 to 223, 321 to 346, and 427 to 451; these read MDDE…QGNP, ISQA…DDKK, and DAPG…SAQN. The span at 23–35 shows a compositional bias: basic and acidic residues; that stretch reads KARDAPLEPKAEP. 3 stretches are compositionally biased toward polar residues: residues 38–49, 86–103, and 143–153; these read EESSSKGVSQTP, PGSS…QKPV, and ISISTDDGSTG. Over residues 154 to 163 the composition is skewed to acidic residues; it reads ENEDVAESEA. Residues 207–216 show a composition bias toward low complexity; that stretch reads SFSGSESSSG.

This sequence belongs to the Ninja family. In terms of assembly, interacts with TIFY10C/JAZ8. Interacts with TIFY11A/JAZ9.

It is found in the nucleus. The protein is Protein NINJA homolog 1 of Oryza sativa subsp. japonica (Rice).